Here is a 248-residue protein sequence, read N- to C-terminus: Phosphatidylglycerol--prolipoprotein diacylglyceryl transferase (248 aa).

3 consecutive transmembrane segments (helical) span residues 6-26, 47-67, and 84-104; these read FTLF…GMIL, NIAI…YVVF, and GGGL…YIYT. Arg-130 is an a 1,2-diacyl-sn-glycero-3-phospho-(1'-sn-glycerol) binding site. 2 consecutive transmembrane segments (helical) span residues 186 to 206 and 218 to 238; these read GQVI…IEGL and MAQV…VYLS.

It belongs to the Lgt family.

It is found in the cell membrane. The catalysed reaction is L-cysteinyl-[prolipoprotein] + a 1,2-diacyl-sn-glycero-3-phospho-(1'-sn-glycerol) = an S-1,2-diacyl-sn-glyceryl-L-cysteinyl-[prolipoprotein] + sn-glycerol 1-phosphate + H(+). Its pathway is protein modification; lipoprotein biosynthesis (diacylglyceryl transfer). In terms of biological role, catalyzes the transfer of the diacylglyceryl group from phosphatidylglycerol to the sulfhydryl group of the N-terminal cysteine of a prolipoprotein, the first step in the formation of mature lipoproteins. This Clostridioides difficile (strain 630) (Peptoclostridium difficile) protein is Phosphatidylglycerol--prolipoprotein diacylglyceryl transferase.